Consider the following 600-residue polypeptide: Epidermal growth factor receptor kinase substrate 8-like protein 3 (600 aa).

A PTB domain is found at 28–155; it reads QHRVEHLMTC…ALEEELEERP (128 aa). 2 disordered regions span residues 152–245 and 429–452; these read EERP…PERD and LHFPRDEPYNHNPEYEDSNLPLSS. Residues 204–214 are compositionally biased toward low complexity; it reads SERSISPSSRS. The residue at position 238 (serine 238) is a Phosphoserine. Residues 457–516 form the SH3 domain; it reads RAALKMQVLYEFEARNAQELTVAQGEILEVLDQSKRWWLVKNEAGLTGYIPSNILEPLPA.

The protein belongs to the EPS8 family. As to quaternary structure, interacts with ABI1. Part of a complex that contains SOS1, ABI1 and EPS8L2. Interacts with FASLG. Detected in embryonic gut. Detected in adult testis, placenta, adrenal gland and intestine.

It is found in the cytoplasm. This chain is Epidermal growth factor receptor kinase substrate 8-like protein 3 (Eps8l3), found in Mus musculus (Mouse).